Here is an 84-residue protein sequence, read N- to C-terminus: DNA-directed RNA polymerase subunit Rpo5 (84 aa).

Belongs to the archaeal Rpo5/eukaryotic RPB5 RNA polymerase subunit family. Part of the RNA polymerase complex.

The protein resides in the cytoplasm. The enzyme catalyses RNA(n) + a ribonucleoside 5'-triphosphate = RNA(n+1) + diphosphate. DNA-dependent RNA polymerase (RNAP) catalyzes the transcription of DNA into RNA using the four ribonucleoside triphosphates as substrates. This chain is DNA-directed RNA polymerase subunit Rpo5, found in Saccharolobus islandicus (strain Y.N.15.51 / Yellowstone #2) (Sulfolobus islandicus).